Here is a 565-residue protein sequence, read N- to C-terminus: Inositol-3-phosphate synthase (565 aa).

The NAD(+) site is built by glycine 70, glycine 71, asparagine 72, asparagine 73, aspartate 144, serine 180, isoleucine 181, glutamine 191, arginine 194, threonine 231, alanine 232, asparagine 233, threonine 234, glycine 282, serine 283, aspartate 307, serine 310, asparagine 341, asparagine 342, aspartate 343, lysine 356, glycine 394, aspartate 395, aspartate 423, and serine 424. Serine 536 carries the post-translational modification Phosphoserine. Residues 546 to 565 (LHANGHSNGSAKLATNGNGH) form a disordered region. Residues 550 to 565 (GHSNGSAKLATNGNGH) show a composition bias toward polar residues.

The protein belongs to the myo-inositol 1-phosphate synthase family. NAD(+) serves as cofactor. As to expression, higher expression in adult heads than bodies.

It localises to the cytoplasm. It carries out the reaction D-glucose 6-phosphate = 1D-myo-inositol 3-phosphate. Its pathway is polyol metabolism; myo-inositol biosynthesis; myo-inositol from D-glucose 6-phosphate: step 1/2. In terms of biological role, key enzyme in myo-inositol biosynthesis pathway that catalyzes the conversion of glucose 6-phosphate to 1-myo-inositol 1-phosphate in a NAD-dependent manner. Rate-limiting enzyme in the synthesis of all inositol-containing compounds. This is Inositol-3-phosphate synthase (Inos) from Drosophila melanogaster (Fruit fly).